A 188-amino-acid polypeptide reads, in one-letter code: Putative CC-type chemokine FPV060 (188 aa).

The protein belongs to the intercrine beta (chemokine CC) family. Highly divergent.

This chain is Putative CC-type chemokine FPV060, found in Fowlpox virus (strain NVSL) (FPV).